The chain runs to 65 residues: MLCLPXFIILLLLASPAAPNPLQTRXQSNLIRAGPEDANIKTXKRVIISGLXXSILVPLIDAIIG.

A signal peptide spans 1-19 (MLCLPXFIILLLLASPAAP). Positions 20–43 (NPLQTRXQSNLIRAGPEDANIKTX) are excised as a propeptide. At isoleucine 64 the chain carries Isoleucine amide.

It belongs to the conotoxin T superfamily. Expressed by the venom duct.

The protein localises to the secreted. The protein is Conotoxin VnMLCL-031 of Conus ventricosus (Mediterranean cone).